We begin with the raw amino-acid sequence, 558 residues long: Putative polypeptide N-acetylgalactosaminyltransferase 13 (558 aa).

Residues 1–12 (MHAGGKYCGPRH) are Cytoplasmic-facing. A helical; Signal-anchor for type II membrane protein membrane pass occupies residues 13–32 (CSFYIIAFLICQLFFLVIFI). Residues 33-558 (RNDDASSANE…QFALEMEGQT (526 aa)) lie on the Lumenal side of the membrane. N48 and N111 each carry an N-linked (GlcNAc...) asparagine glycan. 4 disulfide bridges follow: C97-C335, C326-C412, C445-C460, and C484-C498. The catalytic subdomain A stretch occupies residues 109–225 (EANVSVVISF…EGWLEPLLER (117 aa)). Substrate is bound by residues D150 and R186. D209 contacts Mn(2+). S210 provides a ligand contact to substrate. H211 provides a ligand contact to Mn(2+). The interval 281–343 (PYQSPAFAGG…PCSRIGHIFR (63 aa)) is catalytic subdomain B. Substrate is bound at residue W312. H340 provides a ligand contact to Mn(2+). The substrate site is built by R343 and H346. The Ricin B-type lectin domain occupies 422–556 (VSPELRMHFD…SFQFALEMEG (135 aa)). N-linked (GlcNAc...) asparagine glycosylation occurs at N501. A disulfide bond links C525 and C539.

This sequence belongs to the glycosyltransferase 2 family. GalNAc-T subfamily. The cofactor is Mn(2+). As to expression, during embryonic stages 16-17, very weak expression in the midgut.

The protein localises to the golgi apparatus membrane. It catalyses the reaction L-seryl-[protein] + UDP-N-acetyl-alpha-D-galactosamine = a 3-O-[N-acetyl-alpha-D-galactosaminyl]-L-seryl-[protein] + UDP + H(+). The enzyme catalyses L-threonyl-[protein] + UDP-N-acetyl-alpha-D-galactosamine = a 3-O-[N-acetyl-alpha-D-galactosaminyl]-L-threonyl-[protein] + UDP + H(+). It participates in protein modification; protein glycosylation. May catalyze the initial reaction in O-linked oligosaccharide biosynthesis, the transfer of an N-acetyl-D-galactosamine residue to a serine or threonine residue on the protein receptor. In Drosophila melanogaster (Fruit fly), this protein is Putative polypeptide N-acetylgalactosaminyltransferase 13 (pgant13).